A 280-amino-acid chain; its full sequence is Clathrin adapter accessory protein LAA2 (280 aa).

The interval 1 to 26 is disordered; it reads MSDRDQIEPVTNALDAESDSSDDFGN. Positions 19-30 match the Ear-binding motif motif; that stretch reads DSSDDFGNFSDA.

As to quaternary structure, interacts with the clathrin-associated adapter complex AP-1. Interacts with LAA1.

It is found in the cytoplasmic vesicle. The protein localises to the clathrin-coated vesicle. Functionally, involved in localization of clathrin-associated adapter complex (AP-1) and subsequent AP-1-mediated clathrin-coated vesicle cargo loading. Directly mediates the interaction between LAA1 and AP-1 which is required for AP-1 localization. In complex with LAA1, cooperates with the small GTPase ARF1 and the phosphatidyl-inositol-4-phosphate (PI4P) synthesis to confer temporal specificity to AP-1 recruitment. This chain is Clathrin adapter accessory protein LAA2, found in Saccharomyces cerevisiae (strain ATCC 204508 / S288c) (Baker's yeast).